Consider the following 199-residue polypeptide: MSDSDNNTKSQQNNPTQTDEKSGEEIQSNQKPQRKFTAVLNKKKEKLNEDLSELDKLKQQLAHFQNQFRLAVADKENVKRIMQKNIDDTSIYAISNFARDLLSSCDNLETSLKNLKEDDSIHAGVLMTYKELLNTLERHNITRIDPIGEKFNPQFHKAVSQMTDEDKDENTILHVVQPGYIIKDKLLRPASVIISKKSD.

The segment covering M1 to Q17 has biased composition (polar residues). The disordered stretch occupies residues M1–F36.

The protein belongs to the GrpE family. Homodimer.

Its subcellular location is the cytoplasm. Participates actively in the response to hyperosmotic and heat shock by preventing the aggregation of stress-denatured proteins, in association with DnaK and GrpE. It is the nucleotide exchange factor for DnaK and may function as a thermosensor. Unfolded proteins bind initially to DnaJ; upon interaction with the DnaJ-bound protein, DnaK hydrolyzes its bound ATP, resulting in the formation of a stable complex. GrpE releases ADP from DnaK; ATP binding to DnaK triggers the release of the substrate protein, thus completing the reaction cycle. Several rounds of ATP-dependent interactions between DnaJ, DnaK and GrpE are required for fully efficient folding. This chain is Protein GrpE, found in Ehrlichia canis (strain Jake).